We begin with the raw amino-acid sequence, 655 residues long: Putative phagocytic receptor 1c (655 aa).

A signal peptide spans 1–20 (MLNIIVVLLLLFFSNNVIDS). The span at 146-173 (SNSKSSEITSPPSSPSSSSSSSSSPSSS) shows a compositional bias: low complexity. Positions 146 to 185 (SNSKSSEITSPPSSPSSSSSSSSSPSSSIEEEDDDDTEND) are disordered. Acidic residues predominate over residues 174-183 (IEEEDDDDTE). 9 helical membrane-spanning segments follow: residues 300-320 (IDIIMSFIIVLAVSACLAIIL), 359-379 (FSIIIGFGVQIVASLFILMVF), 387-407 (IATPGGMAIASILIFSFTGIF), 428-448 (SVITTTLIPFTILLLMFIGYF), 461-481 (IGTVFFILAMWLLVCVPCSLL), 518-538 (MILGGIIPFVIIFTDLSFFLS), 550-570 (LSFALTFILMIISIVETNMII), 587-607 (LLGPMVTGLYTFIYFIYFGIT), and 619-639 (FMFSLVFSILVSLFCSSIGFL).

Belongs to the nonaspanin (TM9SF) (TC 9.A.2) family.

It is found in the membrane. In Dictyostelium discoideum (Social amoeba), this protein is Putative phagocytic receptor 1c (phg1c).